The chain runs to 438 residues: Glutamyl-tRNA(Gln) amidotransferase subunit D (438 aa).

One can recognise an Asparaginase/glutaminase domain in the interval P92–N422. Catalysis depends on residues T102, T178, D179, and K256.

This sequence belongs to the asparaginase 1 family. GatD subfamily. Heterodimer of GatD and GatE.

The catalysed reaction is L-glutamyl-tRNA(Gln) + L-glutamine + ATP + H2O = L-glutaminyl-tRNA(Gln) + L-glutamate + ADP + phosphate + H(+). Its function is as follows. Allows the formation of correctly charged Gln-tRNA(Gln) through the transamidation of misacylated Glu-tRNA(Gln) in organisms which lack glutaminyl-tRNA synthetase. The reaction takes place in the presence of glutamine and ATP through an activated gamma-phospho-Glu-tRNA(Gln). The GatDE system is specific for glutamate and does not act on aspartate. The chain is Glutamyl-tRNA(Gln) amidotransferase subunit D from Pyrococcus furiosus (strain ATCC 43587 / DSM 3638 / JCM 8422 / Vc1).